We begin with the raw amino-acid sequence, 161 residues long: uncharacterized protein (161 aa).

This is an uncharacterized protein from Mycoplasma (Bacteriophage L2).